The following is a 170-amino-acid chain: Ubiquitin-conjugating enzyme E2 G1 (170 aa).

The residue at position 1 (Met-1) is an N-acetylmethionine. Position 2 is an N-acetylthreonine; in Ubiquitin-conjugating enzyme E2 G1, N-terminally processed (Thr-2). Residues 5-166 (QSALLLRRQL…VARCVRKSQE (162 aa)) enclose the UBC core domain. Cys-90 serves as the catalytic Glycyl thioester intermediate.

It belongs to the ubiquitin-conjugating enzyme family. Autoubiquitinated.

The catalysed reaction is S-ubiquitinyl-[E1 ubiquitin-activating enzyme]-L-cysteine + [E2 ubiquitin-conjugating enzyme]-L-cysteine = [E1 ubiquitin-activating enzyme]-L-cysteine + S-ubiquitinyl-[E2 ubiquitin-conjugating enzyme]-L-cysteine.. Its pathway is protein modification; protein ubiquitination. In terms of biological role, accepts ubiquitin from the E1 complex and catalyzes its covalent attachment to other proteins. In vitro catalyzes 'Lys-48'-, as well as 'Lys-63'-linked polyubiquitination. May be involved in degradation of muscle-specific proteins. Mediates polyubiquitination of CYP3A4. The chain is Ubiquitin-conjugating enzyme E2 G1 (UBE2G1) from Macaca fascicularis (Crab-eating macaque).